A 613-amino-acid polypeptide reads, in one-letter code: Leucine-rich repeat and immunoglobulin-like domain-containing nogo receptor-interacting protein 1 (613 aa).

A signal peptide spans 1-34 (MLAGEASMRSPILACWQPILLLMLGSILSGSATG). Intrachain disulfides connect cysteine 35/cysteine 41 and cysteine 39/cysteine 50. Positions 35–64 (CPPRCECSAQERAVLCHRKRFMVVPEGIPT) constitute an LRRNT domain. At 35–554 (CPPRCECSAQ…FDIKTLIIAT (520 aa)) the chain is on the extracellular side. LRR repeat units follow at residues 65–86 (ETRQ…EFAN), 89–110 (HLEE…AFNN), 113–134 (NLRT…VFTG), 137–158 (NLTK…MFQD), 161–182 (NLKS…AFSG), 185–206 (SLEQ…ALSH), 209–230 (GLIV…SFKR), 257–278 (NLTS…SVRH), 281–302 (YLRF…MLHD), 305–326 (RLQE…AFRG), and 329–350 (YLRI…AFHS). Asparagine 137 carries N-linked (GlcNAc...) asparagine glycosylation. N-linked (GlcNAc...) asparagine glycosylation occurs at asparagine 195. Residues asparagine 257, asparagine 267, and asparagine 286 are each glycosylated (N-linked (GlcNAc...) asparagine). Asparagine 334 carries an N-linked (GlcNAc...) asparagine glycan. The LRRCT domain maps to 362–416 (NPLACDCRLLWVFRRRWRLNFNKQQPTCSTPEFVQGKEFKDFPDVLLPNYFTCRR). Disulfide bonds link cysteine 366–cysteine 389, cysteine 368–cysteine 414, and cysteine 439–cysteine 490. The Ig-like C2-type domain occupies 404–508 (PDVLLPNYFT…DTMLAHLHVR (105 aa)). Residues asparagine 485, asparagine 498, asparagine 519, asparagine 530, and asparagine 535 are each glycosylated (N-linked (GlcNAc...) asparagine). The helical transmembrane segment at 555–575 (TMGFISFLGVVLFCLVLLFLW) threads the bilayer. The Cytoplasmic segment spans residues 576–613 (SRGKGNTKHNIEIEYVPRKSDAGISSADAPRKFNMKMI).

In terms of assembly, homotetramer. Forms ternary complex with RTN4R/NGFR and RTN4R/TNFRSF19. N-glycosylated. Contains predominantly high-mannose glycans.

The protein localises to the cell membrane. Functional component of the Nogo receptor signaling complex (RTN4R/NGFR) in RhoA activation responsible for some inhibition of axonal regeneration by myelin-associated factors. Is also an important negative regulator of oligodentrocyte differentiation and axonal myelination. The polypeptide is Leucine-rich repeat and immunoglobulin-like domain-containing nogo receptor-interacting protein 1 (LINGO1) (Gallus gallus (Chicken)).